The primary structure comprises 269 residues: GTP cyclohydrolase FolE2 2 (269 aa).

It belongs to the GTP cyclohydrolase IV family.

It catalyses the reaction GTP + H2O = 7,8-dihydroneopterin 3'-triphosphate + formate + H(+). Its pathway is cofactor biosynthesis; 7,8-dihydroneopterin triphosphate biosynthesis; 7,8-dihydroneopterin triphosphate from GTP: step 1/1. In terms of biological role, converts GTP to 7,8-dihydroneopterin triphosphate. In Burkholderia lata (strain ATCC 17760 / DSM 23089 / LMG 22485 / NCIMB 9086 / R18194 / 383), this protein is GTP cyclohydrolase FolE2 2.